Consider the following 41-residue polypeptide: Pi-stichotoxin-Hcr5a (41 aa).

Disulfide bonds link C4–C37, C6–C30, and C20–C38.

It belongs to the sea anemone type 3 (BDS) potassium channel toxin family.

It localises to the secreted. The protein localises to the nematocyst. In terms of biological role, weakly inhibits human homomeric ASIC3 (IC(50)=5.5 uM). The chain is Pi-stichotoxin-Hcr5a from Radianthus crispa (Leathery sea anemone).